The chain runs to 313 residues: Nucleotide-binding protein Swit_0399 (313 aa).

20-27 (GMSGSGKK) contributes to the ATP binding site. 73–76 (DSRT) lines the GTP pocket. The segment at 289–313 (PTVRHRDLTRQKSNAEESTVPGVGS) is disordered. The segment covering 292-303 (RHRDLTRQKSNA) has biased composition (basic and acidic residues).

The protein belongs to the RapZ-like family.

Displays ATPase and GTPase activities. This chain is Nucleotide-binding protein Swit_0399, found in Rhizorhabdus wittichii (strain DSM 6014 / CCUG 31198 / JCM 15750 / NBRC 105917 / EY 4224 / RW1) (Sphingomonas wittichii).